A 268-amino-acid chain; its full sequence is N-formylmaleamate deformylase (268 aa).

Positions 28–251 constitute an AB hydrolase-1 domain; sequence ALILVPGITS…NAGHMIPWDD (224 aa). Residues serine 101, glutamate 221, and histidine 245 each act as charge relay system in the active site.

It carries out the reaction N-formylmaleamate + H2O = maleamate + formate + H(+). Its pathway is cofactor degradation; nicotinate degradation. In terms of biological role, deformylase that catalyzes the conversion of N-formylmaleamic acid to maleamate in the aerobic nicotinate degradation pathway. The polypeptide is N-formylmaleamate deformylase (nicD) (Pseudomonas putida (strain ATCC 47054 / DSM 6125 / CFBP 8728 / NCIMB 11950 / KT2440)).